Reading from the N-terminus, the 228-residue chain is THAP domain-containing protein 2 (228 aa).

Residues 1–80 form a THAP-type zinc finger; the sequence is MPTNCAAAGC…LKMDAVPTIF (80 aa). The short motif at 123–126 is the HCFC1-binding motif (HBM) element; sequence EHSY.

The polypeptide is THAP domain-containing protein 2 (THAP2) (Homo sapiens (Human)).